The following is a 252-amino-acid chain: Ribosomal RNA small subunit methyltransferase J (252 aa).

Residues 101–102 (RD), 117–118 (ER), 153–154 (SS), and aspartate 171 each bind S-adenosyl-L-methionine.

Belongs to the methyltransferase superfamily. RsmJ family.

The protein resides in the cytoplasm. The catalysed reaction is guanosine(1516) in 16S rRNA + S-adenosyl-L-methionine = N(2)-methylguanosine(1516) in 16S rRNA + S-adenosyl-L-homocysteine + H(+). Specifically methylates the guanosine in position 1516 of 16S rRNA. The sequence is that of Ribosomal RNA small subunit methyltransferase J from Salmonella schwarzengrund (strain CVM19633).